The chain runs to 321 residues: Cytochrome c biogenesis protein CcsA (321 aa).

Transmembrane regions (helical) follow at residues 17-37 (IISI…IIGL), 41-61 (LEKG…IRWV), 68-88 (LSNL…IHIF), 143-163 (MLLS…LLVI), 227-247 (IINL…VWAN), 260-277 (ETWA…LHTR), and 288-308 (AIVA…VNLL).

It belongs to the CcmF/CycK/Ccl1/NrfE/CcsA family. In terms of assembly, may interact with Ccs1.

Its subcellular location is the plastid. It is found in the chloroplast thylakoid membrane. Its function is as follows. Required during biogenesis of c-type cytochromes (cytochrome c6 and cytochrome f) at the step of heme attachment. This Piper cenocladum (Ant piper) protein is Cytochrome c biogenesis protein CcsA.